Here is a 498-residue protein sequence, read N- to C-terminus: Cytotardin (498 aa).

Positions Asp18–Glu58 are coil 1A. The 357-residue stretch at Ser22–Leu378 folds into the IF rod domain. Residues Gln59 to Ser69 form a linker 1 region. Residues Lys70–Arg213 form a coil 1B region. The linker 2 stretch occupies residues Gln214–Lys231. A coil 2 region spans residues Leu232–Leu371. The segment at Asp381–Thr425 is disordered. Over residues Gly393–Gly409 the composition is skewed to gly residues.

This sequence belongs to the intermediate filament family.

Its subcellular location is the cytoplasm. The protein localises to the cell cortex. Its function is as follows. Intermediate filament (IF) protein that forms both short filaments and extensive cytoskeletal networks which most likely are homomeric. Some of the cytotardin arrays display cage-like perinuclear structures, while others are located in the periphery close to the cell membrane. The entire tardigrade body is ensheathed by a grid of belt-like filaments formed by the cytotardin protein, which retain their integrity even in contracted specimens. The belt-like structures encircling each epidermal cell might help to resist the shearing forces that arise during freezing and thawing cycles, whereas the dense meshwork at the basis of each claw and around the stylets might provide the tissue stability necessary for locomotion and feeding. This chain is Cytotardin, found in Hypsibius exemplaris (Freshwater tardigrade).